Reading from the N-terminus, the 1497-residue chain is MSLLGTINPNINPERTVAGRGTQEEEGEIARVEHNHHNNAASVSTDETVLERSKEIGDEDVAVEEVTRLARQLTRQSTRFSTSGNVENPFLETKEDSTLNPLSPNFKAKNWMKNLLALSSRDPERYPKRVAGVAFKNLSVHGYGSPTDYQKDVFNSVLEVGTLVRRIMGTGKQKIQILRDFDGLVKSGEMLVVLGRPGSGCSTFLKTISGEMNGIYMDEKSYLNYQGISSKQMRKQFRGEAIYTAETDVHFPQLTVGDTLKFAALARAPRNRLPGVSREQYAVHMRDVVMAMLGLTHTMNTRVGNDFVRGVSGGERKRVSIAEATLSGSPLQCWDNSTRGLDSANALEFCKTLNLMTKYAGATVAVAIYQASQSAYDVFDKVTVLYEGRQIYFGRTDEAKEFFTNMGFECPERQTTADFLTSLTSPAERVVKPGFEGKVPQTPDEFVRAWKSSEAYAKLMREIEEYDREFPIGGESLNQFIESRRAMQAKNQRVKSPYTISVWQQIELCMIRGFQRLKGDSSLTMSQLIGNFIMALVIGSVFYNLPDDTSSFYARGALLFFAVLLNAFSSALEILTLYAQRPIVEKQARYAMYHPFAEAIASMLCDMPYKITNAIIFNLTLYFMTNLRREPGAFFVFLLFSFVTTLTMSMLFRTMAASSRTLSQALVPAAILILGLVIYTGFTIPTRNMLGWSRWMNYIDPIAYGFESLMVNEFHNRQFLCPDSAFVPSSGAYDSQPLAYRVCSTVGSVSGSRYVQGDDYLNQSFQYYKSHQWRNLGIMFGFMFFFMFTYLTATEYISESKSKGEVLLFRRGHAQPTGSHDVEKSPEVSSAAKTDEASSKEATGAIQRQEAIFQWKDVCYDIKIKGEPRRILDHVDGWVKPGTCTALMGVSGAGKTTLLDVLATRVTMGVVSGEMLVDGRPRDQSFQRKTGYVQQQDLHLHTTTVREALRFSALLRQPAHVPRQEKIDYVEEVIKLLGMESYADAVVGVPGEGLNVEQRKRLTIGVELAAKPQLLLFLDEPTSGLDSQTSWSILDLIDTLTKHGQAILCTIHQPSAMLFQRFDRLLFLAKGGKTVYFGEIGEKSSTLASYFERNGAPKLPPDANPAEWMLEVIGAAPGSHSDIDWPAVWRDSPERRAVHEHLDELKRTLSQKPIDPSKADPGSYDEFAAPFTIQLWECLLRVFSQYWRTPVYIYSKTALCVLTALYIGFSFFNAQNSAQGLQNQMFSIFMLMTIFGNLVQQIMPNFCTQRSLYEVRERPSKTYSWKAFMAANIIVELPWNTLMAFLIFVCWYYPIGLYRNAEPTDSVHERGALMFLLIWSFLLFTSTFAHMMIAGIELAETGGNLANLLFSLCLIFCGVLAPPQSLPGFWIFMYRVSPFTYLVSAMLSTGVSGTNAVCEPVEFLHFDPPSNMTCKDYMADYISTRGGYLENPSATSDCTFCTISSTDTFLSAVSSHYSDAWRNFGIMWAYIIFNIFAAVFIYWLARVPKGKRTKGST.

The span at 1–13 (MSLLGTINPNINP) shows a compositional bias: polar residues. The segment at 1 to 21 (MSLLGTINPNINPERTVAGRG) is disordered. N-linked (GlcNAc...) asparagine glycosylation is found at N137 and N336. An ABC transporter 1 domain is found at 158–412 (LEVGTLVRRI…FTNMGFECPE (255 aa)). A run of 5 helical transmembrane segments spans residues 523–543 (LTMS…SVFY), 557–577 (ALLF…ILTL), 599–621 (AIAS…NLTL), 632–652 (GAFF…SMLF), and 665–685 (ALVP…FTIP). An N-linked (GlcNAc...) asparagine glycan is attached at N762. The chain crosses the membrane as a helical span at residues 777 to 797 (GIMFGFMFFFMFTYLTATEYI). The disordered stretch occupies residues 815 to 843 (QPTGSHDVEKSPEVSSAAKTDEASSKEAT). Residues 853-1096 (FQWKDVCYDI…LASYFERNGA (244 aa)) form the ABC transporter 2 domain. 889–896 (GVSGAGKT) is an ATP binding site. Helical transmembrane passes span 1192-1212 (YIYS…FSFF), 1226-1246 (FSIF…MPNF), 1273-1293 (IIVE…CWYY), 1313-1333 (LMFL…HMMI), and 1352-1372 (LCLI…FWIF). N1411 is a glycosylation site (N-linked (GlcNAc...) asparagine). Residues 1464–1484 (FGIMWAYIIFNIFAAVFIYWL) traverse the membrane as a helical segment.

The protein belongs to the ABC transporter superfamily. ABCG family. PDR (TC 3.A.1.205) subfamily.

It is found in the cell membrane. The enzyme catalyses fluconazole(in) + ATP + H2O = fluconazole(out) + ADP + phosphate + H(+). The catalysed reaction is itraconazole(in) + ATP + H2O = itraconazole(out) + ADP + phosphate + H(+). It catalyses the reaction voriconazole(in) + ATP + H2O = voriconazole(out) + ADP + phosphate + H(+). With respect to regulation, the efflux inhibitor FK506 impairs the transport activity. Functionally, pleiotropic ABC efflux transporter that shows a strong substrate specificity for the azole class of drugs such as lotrimazole (CLT), fluconazole (FLC), itraconazole (ITC), ketoconazole (KTC), posaconazole (POS), tebuconazole (TEBZ), and voriconazole (VRC). Is also able to transport rhodamine 6G (R-6G), a known substrate for many ABC transporters. Required for normal pathogenesis in a Galleria mellonella (greater wax moth) infection model. The chain is ABC multidrug transporter C from Aspergillus fumigatus (strain ATCC MYA-4609 / CBS 101355 / FGSC A1100 / Af293) (Neosartorya fumigata).